A 207-amino-acid polypeptide reads, in one-letter code: MDIKKQDTRRFKEIKPKIMYYGTSTFLLTTLNEDGTTNISPMSSSWALGHYIILGVGLGGKAIDNLERHKECVINLPGPDLWENVERISSYSGKKSIPPLKKQIGFTYKKEKYEAAGLTPLQSKTVSPTRIKECPIQIEAEVKHIRLPEYESSFAIVETQALHFHAEESIILDENHINPSKWSPLIYNFRHYFGLGREVGKTFRSET.

The protein belongs to the flavoredoxin family. It depends on FMN as a cofactor.

This is an uncharacterized protein from Bacillus subtilis (strain 168).